The following is a 257-amino-acid chain: Aquaporin TIP4-2 (257 aa).

2 helical membrane-spanning segments follow: residues 32–52 (LVLTFLFVFTGVSASMAAGAG) and 63–83 (TLAAVAIAHALAAGVLVTAGF). The short motif at 91 to 93 (NPA) is the NPA 1 element. Transmembrane regions (helical) follow at residues 107–127 (LRALLYVAAQLLASSLACILL), 150–170 (GLVMEVILTFSLLFVTYAMIL), and 178–198 (TIGPLLTGLIVGANSLAGGNF). An NPA 2 motif is present at residues 204-206 (NPA). The chain crosses the membrane as a helical span at residues 225–245 (WIGPLLGGSLAGFVYESLFMV).

This sequence belongs to the MIP/aquaporin (TC 1.A.8) family. TIP (TC 1.A.8.10) subfamily.

The protein localises to the vacuole membrane. Its function is as follows. Aquaporins facilitate the transport of water and small neutral solutes across cell membranes. This chain is Aquaporin TIP4-2 (TIP4-2), found in Zea mays (Maize).